The following is a 516-amino-acid chain: Endo-acting ulvan lyase (516 aa).

A signal peptide spans 1-24; it reads MLEKTTLKNIILIHFLMFLAVVTA. Cysteine 38 and cysteine 65 are joined by a disulfide. Ca(2+) is bound by residues glycine 42, asparagine 44, aspartate 62, serine 64, alanine 67, and asparagine 68. Tyrosine 138 contacts substrate. Lysine 143 acts as the Proton acceptor in catalysis. Substrate-binding positions include 191 to 195 and 260 to 263; these read EGDGR and YRVK. The Proton donor/acceptor role is filled by tyrosine 260. The ulvan-binding domain stretch occupies residues 289–429; that stretch reads PIGDVYKLKN…VWKAIAVESL (141 aa). Positions 430–516 are cleaved as a propeptide — removed by the type IX secretion system (T9SS); that stretch reads SVDENAILAS…NKYHKKLIVK (87 aa).

The protein belongs to the polysaccharide lyase 28 family. It depends on Ca(2+) as a cofactor.

It localises to the secreted. Ulvan lyase involved in ulvan degradation. Ulvan is the main polysaccharide component of the Ulvales (green seaweed) cell wall. It is composed of disaccharide building blocks comprising 3-sulfated rhamnose (Rha3S) linked to D-glucuronic acid (GlcA), L-iduronic acid (IduA), or D-xylose (Xyl). Ulvan lyase catalyzes the endolytic cleavage of the glycosidic bond between Rha3S and the uronic acids GlcA or IduA, producing oligosaccharides that have unsaturated 4-deoxy-L-threo-hex-4-enopyranosiduronic acid (deltaUA) at the non-reducing end. This results eventually in the degradation of the ulvan polysaccharide into deltaUA-Rha3S disaccharides and deltaUA-Rha3S-Xyl-Rha3S tetrasaccharides. This is Endo-acting ulvan lyase from Formosa agariphila (strain DSM 15362 / KCTC 12365 / LMG 23005 / KMM 3901 / M-2Alg 35-1).